A 492-amino-acid chain; its full sequence is MDPYKYRPSSAFNSPFWTTNSGAPVWNNNNSLTVGTRGPILLEDYHLVEKLANFDRERIPERVVHARGASAKGFFEVTHDVSHLTCADFLRAPGVQTPVIVRFSTVIHERGSPETLRDPRGFAVKFYTREGNFDLVGNNLPVFFVRDGMKFPDMVHALKPNPKNHIQENWRILDFFSHFPESLHMFSFLFDDLGVPQDYRHMDGFGVNTYTLINKAGKAVYVKFHWKTTSGVKCLLEEEAIKVGGANHSHATQDLHDSIAAGNYPEWKLFIQTIDPEHEDKFDFDPLDVTKTWPEDIIPLQPVGRLVLNKNIDNFFAENEQLAFCPAIIVPGVYYSDDKMLQTRIFSYADSQRHRLGPNYLLLPANAPKSAHHNNHHEGFMNFIHRDEEVNYFPSRYDPVRHAEKFPIPPAVFSGRREKIAIEKENNFKQAGERFRSWAPDRQDRFIRRWVDALSDPRVTHEIRSVWISYWSQADRSLGQKIASHLNMRPNI.

Residues histidine 65 and asparagine 138 contribute to the active site. Position 348 (tyrosine 348) interacts with heme.

This sequence belongs to the catalase family. As to quaternary structure, homotetramer. It depends on heme as a cofactor.

The protein resides in the cytoplasm. The protein localises to the cytosol. It localises to the peroxisome matrix. It catalyses the reaction 2 H2O2 = O2 + 2 H2O. Functionally, catalyzes the degradation of hydrogen peroxide (H(2)O(2)) generated by peroxisomal oxidases to water and oxygen, thereby protecting cells from the toxic effects of hydrogen peroxide. The sequence is that of Catalase from Vigna radiata var. radiata (Mung bean).